Here is a 176-residue protein sequence, read N- to C-terminus: ATP-dependent protease subunit HslV (176 aa).

Residue Thr-2 is part of the active site. Residues Gly-157, Cys-160, and Thr-163 each coordinate Na(+).

This sequence belongs to the peptidase T1B family. HslV subfamily. A double ring-shaped homohexamer of HslV is capped on each side by a ring-shaped HslU homohexamer. The assembly of the HslU/HslV complex is dependent on binding of ATP.

Its subcellular location is the cytoplasm. It carries out the reaction ATP-dependent cleavage of peptide bonds with broad specificity.. Its activity is regulated as follows. Allosterically activated by HslU binding. Its function is as follows. Protease subunit of a proteasome-like degradation complex believed to be a general protein degrading machinery. This Pseudomonas putida (strain ATCC 47054 / DSM 6125 / CFBP 8728 / NCIMB 11950 / KT2440) protein is ATP-dependent protease subunit HslV.